The primary structure comprises 132 residues: L-ectoine synthase (132 aa).

This sequence belongs to the ectoine synthase family.

The catalysed reaction is (2S)-4-acetamido-2-aminobutanoate = L-ectoine + H2O. Its pathway is amine and polyamine biosynthesis; ectoine biosynthesis; L-ectoine from L-aspartate 4-semialdehyde: step 3/3. Catalyzes the circularization of gamma-N-acetyl-alpha,gamma-diaminobutyric acid (ADABA) to ectoine (1,4,5,6-tetrahydro-2-methyl-4-pyrimidine carboxylic acid), which is an excellent osmoprotectant. The sequence is that of L-ectoine synthase from Alkalilimnicola ehrlichii (strain ATCC BAA-1101 / DSM 17681 / MLHE-1).